The sequence spans 396 residues: Elongation factor Tu (396 aa).

Positions K10 to E206 constitute a tr-type G domain. The G1 stretch occupies residues G19 to T26. G19–T26 contributes to the GTP binding site. A Mg(2+)-binding site is contributed by T26. Residues G60–N64 form a G2 region. Residues D81 to G84 form a G3 region. Residues D81–H85 and N136–D139 contribute to the GTP site. The interval N136 to D139 is G4. A G5 region spans residues S174–K176.

The protein belongs to the TRAFAC class translation factor GTPase superfamily. Classic translation factor GTPase family. EF-Tu/EF-1A subfamily. As to quaternary structure, monomer.

It localises to the cytoplasm. It carries out the reaction GTP + H2O = GDP + phosphate + H(+). Functionally, GTP hydrolase that promotes the GTP-dependent binding of aminoacyl-tRNA to the A-site of ribosomes during protein biosynthesis. In Polynucleobacter asymbioticus (strain DSM 18221 / CIP 109841 / QLW-P1DMWA-1) (Polynucleobacter necessarius subsp. asymbioticus), this protein is Elongation factor Tu.